We begin with the raw amino-acid sequence, 424 residues long: Serine--tRNA ligase (424 aa).

230–232 (TAE) serves as a coordination point for L-serine. An ATP-binding site is contributed by 261–263 (RSE). E284 is a binding site for L-serine. 348–351 (EISS) lines the ATP pocket. S384 provides a ligand contact to L-serine.

Belongs to the class-II aminoacyl-tRNA synthetase family. Type-1 seryl-tRNA synthetase subfamily. Homodimer. The tRNA molecule binds across the dimer.

The protein localises to the cytoplasm. The catalysed reaction is tRNA(Ser) + L-serine + ATP = L-seryl-tRNA(Ser) + AMP + diphosphate + H(+). The enzyme catalyses tRNA(Sec) + L-serine + ATP = L-seryl-tRNA(Sec) + AMP + diphosphate + H(+). The protein operates within aminoacyl-tRNA biosynthesis; selenocysteinyl-tRNA(Sec) biosynthesis; L-seryl-tRNA(Sec) from L-serine and tRNA(Sec): step 1/1. Catalyzes the attachment of serine to tRNA(Ser). Is also able to aminoacylate tRNA(Sec) with serine, to form the misacylated tRNA L-seryl-tRNA(Sec), which will be further converted into selenocysteinyl-tRNA(Sec). This Streptococcus pneumoniae serotype 4 (strain ATCC BAA-334 / TIGR4) protein is Serine--tRNA ligase.